The chain runs to 1024 residues: MKQTTRPPAQYIVAPGTRFRLVANEYDKNKYGQCNYASYRTLVRCKQIRSKEELAKHGGRCEEHVEFSKTLENNHKKEVMRCHAENDSKMQRRRFDPWIASNEYISDDDDYLQAAQTVPQRLPDVANDDILDNNSLRYAEYYTDKDILNIKMDLVQKDIDDLIEFKELVTSQAQKEHELLGNDEEEDYPTDMAQRRIFKASTKYSRNDYLTLTTIDPVFHQCCVGPDMDDSLVIVHTMHSILDKIDNFEPIDSEKQCNKPALHLSKFCFDHIILDRSQKMFDVCNACGLTAIGGVDPKCSFHIKSSAIAETTSCPCNRCVQPGEHASPKDEKNSITCYLNSSDDDEPTLGNLSRIESMVSPMQQFSNQSNTLTAPLPRRYQGPPAQVLRPPQMGPPPGINQVPYQPKANRTPPMTSQQLHEQQKLKMQEEEMMSQTCASDFRVRPIDASQFGGGKKKQRLPPRRSPSFGTSPNSYQFHQQSQKKMPSIISTAYNSSPGKMNFQGWKNQSTSSATRPLPQPRFPVHAARSQQPKMIPLEQTQDSIEDDIGPSPMFQGPEPSRRGVPYYKNAYRRTELPSRHAQHSPLTPSTSTSSSQLLAPPKSPQPGTSSQTFRSQASRLPIAPHRAIAAGLNPADVGTRPAYRSQMAGQRPGMTPSAQQGSPQLISPPRQGSMMPVAMNQSPQAVRRQTPVPPYRLMGPQRVTTSYTVVRSGSSSSVAGPSRSSVASGSQHTALDTVQHDPRLANINVRTFLSIGNRDLSTLTQDEIDLLMAGNSPEKGGRKAGAPGAKESSKAAGGAQKGTSAASTSVPEPTKSSESSVDPQSDVSFSNPSPAPEVIEKVAPAAMTITSNKRKIDETLASESTSSEATLIHDTTSSSSAETVSGEPPAKKSSDVSAPVPSPEKEKEKIDRPKTPKSSTKRTTPTPSGRTPRAAAIAANQAISHSKPNVPSASTSSSAASTDQENPLDLLAELSVAAAAEEQQQAIGSTSKNGGSTKKTQRKSPSRSSIGKKRENSEEYEEEL.

Disordered stretches follow at residues Asp447–Pro486, Asn501–Val564, Pro577–Ala617, Ser645–Gln664, Val710–Gln739, and Ala773–Leu1024. Composition is skewed to polar residues over residues Ser467 to Pro486, Asn501 to Thr514, and Arg528 to Asp542. Low complexity predominate over residues Ser584–Pro600. A compositionally biased stretch (polar residues) spans Gln605–Ala617. 2 stretches are compositionally biased toward low complexity: residues Val710 to Ser730 and Ala784 to Ser809. The segment covering Val810–Pro832 has biased composition (polar residues). Positions Thr859–Thr870 are enriched in low complexity. The span at His873–Thr883 shows a compositional bias: polar residues. Residues Pro903–Lys914 show a composition bias toward basic and acidic residues. Composition is skewed to low complexity over residues Pro916–Ile943, Ser952–Thr962, and Leu970–Ala986. The segment covering Ile987–Lys998 has biased composition (polar residues).

The protein localises to the nucleus. Its subcellular location is the cytoplasm. It localises to the cell projection. The protein resides in the axon. Functionally, nuclear factor that influences the activity of genes involved in vulval development. The protein is Protein sumv-1 of Caenorhabditis elegans.